Here is a 107-residue protein sequence, read N- to C-terminus: Replication initiation control protein YabA (107 aa).

Zn(2+) is bound by residues His81, Cys83, Cys97, and Cys100.

The protein belongs to the YabA family. As to quaternary structure, homotetramer. Interacts with both DnaA and DnaN, acting as a bridge between these two proteins. The cofactor is Zn(2+).

The protein localises to the cytoplasm. It is found in the nucleoid. Functionally, involved in control of chromosome replication initiation. Inhibits the cooperative binding of DnaA to the oriC region, thus negatively regulating initiation of chromosome replication. Inhibits the ability of DnaA-ATP to form a helix on DNA; does not disassemble preformed DnaA-DNA helices. Decreases the residence time of DnaA on the chromosome at its binding sites (oriC, replication forks and promoter-binding sites). Tethers DnaA to the replication machinery via the DNA polymerase beta sliding clamp subunit (dnaN). Associates with oriC and other DnaA targets on the chromosome in a DnaA-dependent manner. In Streptococcus pyogenes serotype M18 (strain MGAS8232), this protein is Replication initiation control protein YabA.